The sequence spans 967 residues: A disintegrin and metalloproteinase with thrombospondin motifs 1 (967 aa).

Positions 1–54 (MQPEVPLGSGKLKPCSDMGDIQRAAKFRSSQSAHMLLLLLASITMLLCVRGAHG) are cleaved as a signal peptide. Residues 55-252 (RPTEEDEELV…TGPGSIRKKR (198 aa)) constitute a propeptide that is removed on maturation. Residues 198-252 (RGSGGAKCGVMDEETLPTSNSGRESQNTPDQWPLRNPTPQGAGKPTGPGSIRKKR) form a disordered region. The short motif at 203–210 (AKCGVMDE) is the Cysteine switch element. Residue Cys-205 participates in Zn(2+) binding. Over residues 213–227 (LPTSNSGRESQNTPD) the composition is skewed to polar residues. The Peptidase M12B domain occupies 258–467 (RYVETMLVAD…GHGECLMDKP (210 aa)). Ca(2+)-binding residues include Glu-261, Asp-344, and Asp-351. Disulfide bonds link Cys-333/Cys-385, Cys-362/Cys-367, Cys-379/Cys-462, and Cys-417/Cys-446. His-401 lines the Zn(2+) pocket. Residue Glu-402 is part of the active site. Residues His-405 and His-411 each contribute to the Zn(2+) site. Ca(2+) contacts are provided by Cys-462 and Asp-465. Residues 476-558 (DLPGTLYDAN…TDMKHFATPV (83 aa)) form the Disintegrin domain. Cystine bridges form between Cys-488–Cys-511, Cys-499–Cys-521, Cys-506–Cys-540, and Cys-534–Cys-545. Residue Asn-547 is glycosylated (N-linked (GlcNAc...) asparagine). The TSP type-1 1 domain maps to 559–614 (HGSWGPWGPWGDCSRTCGGGVQYTMRECDNPVPKNGGKYCEGKRVRYRSCNIEDCP). 3 disulfides stabilise this stretch: Cys-571/Cys-608, Cys-575/Cys-613, and Cys-586/Cys-598. Asn-720, Asn-764, and Asn-782 each carry an N-linked (GlcNAc...) asparagine glycan. Residues 725-857 (KKISGTVTST…PFNAIPTFSE (133 aa)) are spacer. TSP type-1 domains follow at residues 854-910 (TFSE…LPCP) and 911-967 (RWQV…TQCS). An N-linked (GlcNAc...) asparagine glycan is attached at Asn-945.

The cofactor is Zn(2+). The precursor is cleaved by a furin endopeptidase. In terms of processing, glycosylated. Can be O-fucosylated by POFUT2 on a serine or a threonine residue found within the consensus sequence C1-X(2)-(S/T)-C2-G of the TSP type-1 repeat domains where C1 and C2 are the first and second cysteine residue of the repeat, respectively. Fucosylated repeats can then be further glycosylated by the addition of a beta-1,3-glucose residue by the glucosyltransferase, B3GALTL. Fucosylation mediates the efficient secretion of ADAMTS family members. Can also be C-glycosylated with one or two mannose molecules on tryptophan residues within the consensus sequence W-X-X-W of the TPRs, and N-glycosylated. These other glycosylations can also facilitate secretion.

It is found in the secreted. The protein localises to the extracellular space. The protein resides in the extracellular matrix. Its function is as follows. Metalloprotease which cleaves aggrecan, a cartilage proteoglycan, at the '1683-Glu-|-Leu-1684' site (within the chondroitin sulfate attachment domain), and may be involved in its turnover. Also cleaves COMP. Has angiogenic inhibitor activity. May play a critical role in follicular rupture. The chain is A disintegrin and metalloproteinase with thrombospondin motifs 1 (Adamts1) from Rattus norvegicus (Rat).